We begin with the raw amino-acid sequence, 397 residues long: DNA-directed RNA polymerase subunit Rpo1C (397 aa).

It belongs to the RNA polymerase beta' chain family. Part of the RNA polymerase complex.

The protein resides in the cytoplasm. It catalyses the reaction RNA(n) + a ribonucleoside 5'-triphosphate = RNA(n+1) + diphosphate. In terms of biological role, DNA-dependent RNA polymerase (RNAP) catalyzes the transcription of DNA into RNA using the four ribonucleoside triphosphates as substrates. Forms part of the jaw domain. The chain is DNA-directed RNA polymerase subunit Rpo1C from Pyrococcus abyssi (strain GE5 / Orsay).